Here is a 332-residue protein sequence, read N- to C-terminus: Glyceraldehyde-3-phosphate dehydrogenase (332 aa).

Residues 10–11 (RI), D36, K81, and S116 contribute to the NAD(+) site. Residues 150–152 (SCT), T181, R197, 210–211 (TK), and R233 each bind D-glyceraldehyde 3-phosphate. Catalysis depends on C151, which acts as the Nucleophile. Residue N314 coordinates NAD(+).

It belongs to the glyceraldehyde-3-phosphate dehydrogenase family. Homotetramer.

It is found in the cytoplasm. The catalysed reaction is D-glyceraldehyde 3-phosphate + phosphate + NAD(+) = (2R)-3-phospho-glyceroyl phosphate + NADH + H(+). It participates in carbohydrate degradation; glycolysis; pyruvate from D-glyceraldehyde 3-phosphate: step 1/5. Catalyzes the oxidative phosphorylation of glyceraldehyde 3-phosphate (G3P) to 1,3-bisphosphoglycerate (BPG) using the cofactor NAD. The first reaction step involves the formation of a hemiacetal intermediate between G3P and a cysteine residue, and this hemiacetal intermediate is then oxidized to a thioester, with concomitant reduction of NAD to NADH. The reduced NADH is then exchanged with the second NAD, and the thioester is attacked by a nucleophilic inorganic phosphate to produce BPG. This is Glyceraldehyde-3-phosphate dehydrogenase (gapA) from Helicobacter pylori (strain J99 / ATCC 700824) (Campylobacter pylori J99).